Consider the following 108-residue polypeptide: UPF0060 membrane protein YnfA (108 aa).

Residues 1 to 5 (MIKTT) lie on the Periplasmic side of the membrane. Residues 6–26 (LLFFATALCEIIGCFLPWLWL) form a helical membrane-spanning segment. Over 27–30 (KRNA) the chain is Cytoplasmic. The helical transmembrane segment at 31–51 (SIWLLLPAGISLALFVWLLTL) threads the bilayer. Over 52–60 (HPAASGRVY) the chain is Periplasmic. A helical transmembrane segment spans residues 61–81 (AAYGGVYVCTALMWLRVVDGV). Residues 82-84 (KLS) are Cytoplasmic-facing. The helical transmembrane segment at 85 to 105 (LYDWTGALIALCGMLIIVAGW) threads the bilayer. At 106–108 (GRT) the chain is on the periplasmic side.

The protein belongs to the UPF0060 family.

Its subcellular location is the cell inner membrane. The polypeptide is UPF0060 membrane protein YnfA (Shigella flexneri serotype 5b (strain 8401)).